The primary structure comprises 560 residues: Putative transport protein VV1438 (560 aa).

5 consecutive transmembrane segments (helical) span residues 5-25, 37-57, 66-86, 91-111, and 164-184; these read VVLL…AIGL, LGNS…GFSF, FMLF…GIFF, HYFT…YFAS, and VGYA…AKLL. RCK C-terminal domains are found at residues 203–292 and 293–376; these read RGLG…FRNG and KEVF…RIGF. The next 6 membrane-spanning stretches (helical) occupy residues 386–406, 409–429, 443–463, 478–498, 506–526, and 539–559; these read LLAF…TMTF, VSFS…LGFL, ALNM…GLSA, IIGI…LVGA, ALLF…DIVN, and AGTY…LIIL.

This sequence belongs to the AAE transporter (TC 2.A.81) family. YbjL subfamily.

It is found in the cell membrane. This Vibrio vulnificus (strain YJ016) protein is Putative transport protein VV1438.